Here is a 496-residue protein sequence, read N- to C-terminus: MLSLRPYEFWFVTGSQHLYGEEALKQVEEHSRTIVNELNRDSVFPFPLVFKPIVTTPEEIRNICLEANASEQCAGVVTWMHTFSPAKMWIGGLLELRKPLLHLHTQFNRDIPWDSIDMDFMNLNQSAHGDREYGFIGARMGVARKVVVGHWEDPEVRERLAKWMRTAVAFAESRHLKVARFGDNMREVAVTEGDKVGAQIQFGWSINGYGIGDLVQSIRDVSEQSVNELLDEYAELYDIVPAGRQDGPVRESIREQARIELGLKAFLQDGNFTAFTTTFEDLHGMKQLPGLAVQRLMAEGYGFGGEGDWKTAALVRLMKVMADGKGTSFMEDYTYHFEPGNEMILGAHMLEVCPTIAATRPRIEVHPLSIGGKEDPARLVFDGGEGAAVNASLIDLGHRFRLIVNEVDAVKPEFDMLKLPVARILWKPRPSLRDSAEAWILAGGAHHTCFSFAVTAEQLEDFAEMTGIECVVINEHTSVSSFKNELRWNEVFWRGR.

Mn(2+) contacts are provided by glutamate 306, glutamate 331, histidine 348, and histidine 447.

The protein belongs to the arabinose isomerase family. The cofactor is Mn(2+).

It catalyses the reaction beta-L-arabinopyranose = L-ribulose. The protein operates within carbohydrate degradation; L-arabinose degradation via L-ribulose; D-xylulose 5-phosphate from L-arabinose (bacterial route): step 1/3. Catalyzes the conversion of L-arabinose to L-ribulose. The polypeptide is L-arabinose isomerase (Geobacillus thermodenitrificans (strain NG80-2)).